A 377-amino-acid polypeptide reads, in one-letter code: Anhydro-N-acetylmuramic acid kinase (377 aa).

Glycine 12–aspartate 19 serves as a coordination point for ATP.

This sequence belongs to the anhydro-N-acetylmuramic acid kinase family.

It carries out the reaction 1,6-anhydro-N-acetyl-beta-muramate + ATP + H2O = N-acetyl-D-muramate 6-phosphate + ADP + H(+). Its pathway is amino-sugar metabolism; 1,6-anhydro-N-acetylmuramate degradation. It functions in the pathway cell wall biogenesis; peptidoglycan recycling. In terms of biological role, catalyzes the specific phosphorylation of 1,6-anhydro-N-acetylmuramic acid (anhMurNAc) with the simultaneous cleavage of the 1,6-anhydro ring, generating MurNAc-6-P. Is required for the utilization of anhMurNAc either imported from the medium or derived from its own cell wall murein, and thus plays a role in cell wall recycling. This Methylorubrum extorquens (strain CM4 / NCIMB 13688) (Methylobacterium extorquens) protein is Anhydro-N-acetylmuramic acid kinase.